The sequence spans 294 residues: Ribosomal protein L11 methyltransferase (294 aa).

Threonine 144, glycine 165, aspartate 187, and asparagine 229 together coordinate S-adenosyl-L-methionine.

Belongs to the methyltransferase superfamily. PrmA family.

It localises to the cytoplasm. The catalysed reaction is L-lysyl-[protein] + 3 S-adenosyl-L-methionine = N(6),N(6),N(6)-trimethyl-L-lysyl-[protein] + 3 S-adenosyl-L-homocysteine + 3 H(+). Its function is as follows. Methylates ribosomal protein L11. The chain is Ribosomal protein L11 methyltransferase from Pseudomonas paraeruginosa (strain DSM 24068 / PA7) (Pseudomonas aeruginosa (strain PA7)).